The following is an 836-amino-acid chain: Serine/threonine-protein kinase ppk5 (836 aa).

Disordered stretches follow at residues methionine 1–proline 29, isoleucine 192–serine 214, cysteine 230–isoleucine 307, and threonine 328–asparagine 381. Polar residues-rich tracts occupy residues isoleucine 192–proline 205, glutamine 232–valine 241, and lysine 265–threonine 288. Residues serine 289 to aspartate 298 are compositionally biased toward basic and acidic residues. The span at serine 338 to lysine 347 shows a compositional bias: basic residues. Residues serine 353–serine 362 show a composition bias toward low complexity. Residues tyrosine 518–isoleucine 814 form the Protein kinase domain. ATP contacts are provided by residues valine 524–valine 532 and lysine 547. The Proton acceptor role is filled by aspartate 644. A Phosphotyrosine modification is found at tyrosine 678.

Belongs to the protein kinase superfamily. CMGC Ser/Thr protein kinase family. MNB/DYRK subfamily.

The protein resides in the cytoplasm. The catalysed reaction is L-seryl-[protein] + ATP = O-phospho-L-seryl-[protein] + ADP + H(+). It catalyses the reaction L-threonyl-[protein] + ATP = O-phospho-L-threonyl-[protein] + ADP + H(+). Has a role in meiosis. This Schizosaccharomyces pombe (strain 972 / ATCC 24843) (Fission yeast) protein is Serine/threonine-protein kinase ppk5 (ppk5).